Here is a 486-residue protein sequence, read N- to C-terminus: Ribosomal RNA small subunit methyltransferase F (486 aa).

S-adenosyl-L-methionine-binding positions include 124–130 (ASAPGSK), glutamate 148, aspartate 175, and aspartate 193. Catalysis depends on cysteine 246, which acts as the Nucleophile.

Belongs to the class I-like SAM-binding methyltransferase superfamily. RsmB/NOP family.

The protein localises to the cytoplasm. The catalysed reaction is cytidine(1407) in 16S rRNA + S-adenosyl-L-methionine = 5-methylcytidine(1407) in 16S rRNA + S-adenosyl-L-homocysteine + H(+). Functionally, specifically methylates the cytosine at position 1407 (m5C1407) of 16S rRNA. This Shewanella baltica (strain OS223) protein is Ribosomal RNA small subunit methyltransferase F.